The primary structure comprises 126 residues: Follitropin subunit beta (126 aa).

The N-terminal stretch at Met1–Gln19 is a signal peptide. Disulfide bonds link Cys21/Cys69, Cys35/Cys84, Cys38/Cys122, Cys46/Cys100, Cys50/Cys102, and Cys105/Cys112. Asn25 and Asn42 each carry an N-linked (GlcNAc...) asparagine glycan.

It belongs to the glycoprotein hormones subunit beta family. Heterodimer. The active follitropin is a heterodimer composed of an alpha chain/CGA shared with other hormones and a unique beta chain/FSHB shown here.

It localises to the secreted. In terms of biological role, together with the alpha chain CGA constitutes follitropin, the follicle-stimulating hormone, and provides its biological specificity to the hormone heterodimer. Binds FSHR, a G protein-coupled receptor, on target cells to activate downstream signaling pathways. Follitropin is involved in follicle development and spermatogenesis in reproductive organs. In Phodopus sungorus (Striped hairy-footed hamster), this protein is Follitropin subunit beta (FSHB).